Reading from the N-terminus, the 774-residue chain is Ent-beyerene synthase KSL4, chloroplastic (774 aa).

The transit peptide at 1-35 (MLLGSTNTLRISSHGKEWEGKTLTGMPLGKVNQRV) directs the protein to the chloroplast. Mg(2+) contacts are provided by D525, D529, N668, D669, T672, and E676. Residues 525–529 (DDFFD) carry the DDXXD motif motif.

Belongs to the terpene synthase family. It depends on Mg(2+) as a cofactor.

It is found in the plastid. Its subcellular location is the chloroplast. It carries out the reaction ent-copalyl diphosphate = ent-beyerene + diphosphate. The enzyme catalyses ent-copalyl diphosphate = ent-atiserene + diphosphate. The catalysed reaction is ent-copalyl diphosphate = ent-kaur-16-ene + diphosphate. The protein operates within secondary metabolite biosynthesis; terpenoid biosynthesis. Diterpene cyclase involved in the biosynthesis of labdane-related diterpenoids (LRDs) natural products. Catalyzes the cyclization of ent-CDP into ent-beyerene as a major and ent-kaurene and ent-atiserene as minor products. The polypeptide is Ent-beyerene synthase KSL4, chloroplastic (Ricinus communis (Castor bean)).